The primary structure comprises 352 residues: Small ribosomal subunit biogenesis GTPase RsgA (352 aa).

A compositionally biased stretch (basic residues) spans 1 to 11 (MTKRKLSKGQQ). Residues 1 to 35 (MTKRKLSKGQQRRVQENHKKRLQSKEKKNHVELDD) are disordered. The segment covering 13-33 (RVQENHKKRLQSKEKKNHVEL) has biased composition (basic and acidic residues). The CP-type G domain occupies 114–276 (YYDGIKPIAA…VIDSPGVREF (163 aa)). GTP is bound by residues 162–165 (NKVD) and 216–224 (GQSGVGKSS). Residues Cys300, Cys305, His307, and Cys313 each contribute to the Zn(2+) site.

Belongs to the TRAFAC class YlqF/YawG GTPase family. RsgA subfamily. As to quaternary structure, monomer. Associates with 30S ribosomal subunit, binds 16S rRNA. Zn(2+) serves as cofactor.

The protein resides in the cytoplasm. Functionally, one of several proteins that assist in the late maturation steps of the functional core of the 30S ribosomal subunit. Helps release RbfA from mature subunits. May play a role in the assembly of ribosomal proteins into the subunit. Circularly permuted GTPase that catalyzes slow GTP hydrolysis, GTPase activity is stimulated by the 30S ribosomal subunit. This chain is Small ribosomal subunit biogenesis GTPase RsgA, found in Proteus mirabilis (strain HI4320).